The chain runs to 295 residues: uncharacterized protein (295 aa).

Residues 8-106 (QKTINWIESH…HMPPGAYRTF (99 aa)) form the HTH araC/xylS-type domain. The segment at residues 25 to 46 (EDIVNVSSFSKFHFHRIFQKEV) is a DNA-binding region (H-T-H motif).

Probable transcriptional regulator. This is an uncharacterized protein from Bacillus subtilis (strain 168).